Consider the following 134-residue polypeptide: MLSPKRTRFRKQHRGRMKGISSRGNRISFGKYALQALEPAWITSRQIEAGRRAMTRNARRGGKIWVRIFPDKPVTLRPAETRMGSGKGSPEYWVAVVKPGRILYEMGGVTENIARRAISLAASKMPIRTQFIIS.

The span at 1-17 (MLSPKRTRFRKQHRGRM) shows a compositional bias: basic residues. The tract at residues 1-21 (MLSPKRTRFRKQHRGRMKGIS) is disordered.

This sequence belongs to the universal ribosomal protein uL16 family. In terms of assembly, part of the 50S ribosomal subunit.

The protein localises to the plastid. Its subcellular location is the chloroplast. The chain is Large ribosomal subunit protein uL16c from Solanum bulbocastanum (Wild potato).